Here is a 247-residue protein sequence, read N- to C-terminus: NAD-dependent protein deacetylase (247 aa).

The 247-residue stretch at 1–247 folds into the Deacetylase sirtuin-type domain; that stretch reads METFKSILHE…EFARSLGMKK (247 aa). Residues Ala20, Thr24, Phe31, Arg32, Gln100, Ile102, Asp103, and His118 each contribute to the NAD(+) site. Position 31 (Phe31) interacts with nicotinamide. 2 residues coordinate nicotinamide: Ile102 and Asp103. The active-site Proton acceptor is the His118. Zn(2+)-binding residues include Cys126, Cys129, Cys146, and Cys156. Residues Thr192, Ser193, Asn218, and Ile236 each contribute to the NAD(+) site.

The protein belongs to the sirtuin family. Class U subfamily. Requires Zn(2+) as cofactor.

The protein localises to the cytoplasm. It carries out the reaction N(6)-acetyl-L-lysyl-[protein] + NAD(+) + H2O = 2''-O-acetyl-ADP-D-ribose + nicotinamide + L-lysyl-[protein]. Functionally, NAD-dependent protein deacetylase which modulates the activities of several enzymes which are inactive in their acetylated form. The sequence is that of NAD-dependent protein deacetylase from Bacillus subtilis (strain 168).